Reading from the N-terminus, the 34-residue chain is Photosystem I reaction center subunit XII (34 aa).

Residues valine 10–tyrosine 32 traverse the membrane as a helical segment.

This sequence belongs to the PsaM family.

The protein localises to the cellular thylakoid membrane. This is Photosystem I reaction center subunit XII from Parasynechococcus marenigrum (strain WH8102).